The sequence spans 273 residues: GDNF family receptor alpha-4 (273 aa).

An N-linked (GlcNAc...) asparagine glycan is attached at Asn-192. Asn-250 carries GPI-anchor amidated asparagine lipidation. The propeptide at 251–273 is removed in mature form; that stretch reads AGCCFLWVSSMSILTALALQALL.

The protein belongs to the GDNFR family. Interacts with ARTN ligand and RET: forms a 2:2:2 ternary complex composed of ARTN ligand, GFRA3 and RET receptor. Interacts with SORL1. As to expression, weakly expressed in heart, brain and testis.

Its subcellular location is the cell membrane. It localises to the secreted. Its function is as follows. Receptor for persephin (PSPN), a growth factor that exhibits neurotrophic activity on mesencephalic dopaminergic and motor neurons. Acts by binding to its coreceptor, GFRA4, leading to autophosphorylation and activation of the RET receptor. May be important in C-cell development and, in the postnatal development of the adrenal medulla. The sequence is that of GDNF family receptor alpha-4 (Gfra4) from Rattus norvegicus (Rat).